Consider the following 311-residue polypeptide: Glutaminase (311 aa).

S69, N120, E164, N171, Y195, Y247, and V265 together coordinate substrate.

This sequence belongs to the glutaminase family. In terms of assembly, homotetramer.

The enzyme catalyses L-glutamine + H2O = L-glutamate + NH4(+). In Colwellia psychrerythraea (strain 34H / ATCC BAA-681) (Vibrio psychroerythus), this protein is Glutaminase.